Reading from the N-terminus, the 1024-residue chain is MSAAKENPCRKFQANIFNKSKCQNCFKPRESHLLNDEDLTQAKPIYGGWLLLAPDGTDFDNPVHRSRKWQRRFFILYEHGLLRYALDEMPTTLPQGTINMNQCTDVVDGEARTGQKFSLCILTPDKEHFIRAETKEIISGWLEMLMVYPRTNKQNQKKKRKVEPPTPQEPGPAKMAVTSSSGGSSGSSSSIPSAEKVPTTKSTLWQEEMRAKDQPDGTSLSPAQSPSQSQPPAACTPREPGLESKEDESTISGDRVDGGRKVRVESGYFSLEKAKQDLRAEEQLPPLLSPPSPSTPHSRRSQVIEKFEALDIEKAEHMETNMLILTTPSSDTRQGRSERRAIPRKRDFASEAPTAPLSDACPLSPHRRAKSLDRRSTESSMTPDLLNFKKGWLTKQYEDGQWKKHWFVLADQSLRYYRDSVAEEAADLDGEINLSTCYDVTEYPVQRNYGFQIHTKEGEFTLSAMTSGIRRNWIQTIMKHVLPASAPDVTSSLPEGKNKSTSFETCSRSTEKQEAEPGEPDPEQKKSRARERRREGRSKTFDWAEFRPIQQALAQERASAVGSSDSGDPGCLEAEPGELERERARRREERRKRFGMLDTIDGPGMEDTALRMDIDRSPGLLGTPDLKTQNVHVEIEQRWHQVETTPLREEKQVPIAPLHLSLEDRSERLSTHELTSLLEKELEQSQKEASDLLEQNRLLQDQLRVALGREQSAREGYVLQATCERGFAAMEETHQKKIEDLQRQHQRELEKLREEKDRLLAEETAATISAIEAMKNAHREEMERELEKSQRSQISSINSDIEALRRQYLEELQSVQRELEVLSEQYSQKCLENAHLAQALEAERQALRQCQRENQELNAHNQELNNRLAAEITRLRTLLTGDGGGESTGLPLTQGKDAYELEVLLRVKESEIQYLKQEISSLKDELQTALRDKKYASDKYKDIYTELSIAKAKADCDISRLKEQLKAATEALGEKSPEGTTVSGYDIMKSKSNPDFLKKDRSCVTRQLRNIRSKSVIEQVSWDN.

Positions 1–382 (MSAAKENPCR…DRRSTESSMT (382 aa)) are interaction with F-actin. A PH 1 domain is found at 43 to 150 (KPIYGGWLLL…WLEMLMVYPR (108 aa)). A disordered region spans residues 152 to 262 (NKQNQKKKRK…GDRVDGGRKV (111 aa)). Low complexity predominate over residues 179–190 (SSSGGSSGSSSS). 5 positions are modified to phosphoserine: Ser193, Ser219, Ser221, Ser225, and Ser227. Low complexity predominate over residues 221–233 (SPAQSPSQSQPPA). Residues 240-262 (PGLESKEDESTISGDRVDGGRKV) are compositionally biased toward basic and acidic residues. A phosphoserine mark is found at Ser266, Ser270, Ser289, and Ser292. Disordered regions lie at residues 274-301 (AKQD…SRRS) and 328-379 (PSSD…STES). The residue at position 295 (Thr295) is a Phosphothreonine. Over residues 333 to 349 (RQGRSERRAIPRKRDFA) the composition is skewed to basic and acidic residues. At Ser364 the chain carries Phosphoserine. A PH 2 domain is found at 386-482 (LNFKKGWLTK…WIQTIMKHVL (97 aa)). The segment at 486 to 583 (APDVTSSLPE…AEPGELERER (98 aa)) is disordered. Residues 488 to 508 (DVTSSLPEGKNKSTSFETCSR) are compositionally biased toward polar residues. The residue at position 492 (Ser492) is a Phosphoserine. Positions 522 to 545 (PEQKKSRARERRREGRSKTFDWAE) are enriched in basic and acidic residues. The segment at 545-823 (EFRPIQQALA…SVQRELEVLS (279 aa)) is interaction with RHOA. The residue at position 617 (Ser617) is a Phosphoserine. Thr645 carries the phosphothreonine modification. Residues 672-976 (HELTSLLEKE…AATEALGEKS (305 aa)) are a coiled coil. At Ser799 the chain carries Phosphoserine. Residues 823–878 (SEQYSQKCLENAHLAQALEAERQALRQCQRENQELNAHNQELNNRLAAEITRLRTL) form an interaction with PPP1R12A region. A disordered region spans residues 972-995 (LGEKSPEGTTVSGYDIMKSKSNPD). Residues Ser976, Gly979, Ser992, Ser1013, and Ser1015 each carry the phosphoserine modification.

As to quaternary structure, binds RHOA, PPP1R12A/MBS and PPP1R12C/MBS85 through adjacent coiled coil domains. Interacts with MYZAP. Binds F-actin through its N-terminus. As to expression, expressed in Kidney, Brain, Heart and Lung.

The protein localises to the cytoplasm. It localises to the cytoskeleton. In terms of biological role, targets myosin phosphatase to the actin cytoskeleton. Required for the regulation of the actin cytoskeleton by RhoA and ROCK1. Depletion leads to an increased number of stress fibers in smooth muscle cells through stabilization of actin fibers by phosphorylated myosin. Overexpression of MRIP as well as its F-actin-binding region leads to disassembly of stress fibers in neuronal cells. This chain is Myosin phosphatase Rho-interacting protein (Mprip), found in Mus musculus (Mouse).